Here is a 130-residue protein sequence, read N- to C-terminus: MAKVQYMGTGRRKKSVARVRLVPGEGRVIVNNREIETYFGLETLRVVVNQPLVLTETKDKYDVLVNVHGGGLSGQAGAIRHGISRALLKADENLRPELKKAGFLTRDPRMVERKKCGLKKARRSPQFSKR.

This sequence belongs to the universal ribosomal protein uS9 family.

The sequence is that of Small ribosomal subunit protein uS9 from Clostridium perfringens (strain ATCC 13124 / DSM 756 / JCM 1290 / NCIMB 6125 / NCTC 8237 / Type A).